Consider the following 481-residue polypeptide: UDP-N-acetylmuramate--L-alanine ligase (481 aa).

115–121 (GTHGKTT) is a binding site for ATP.

It belongs to the MurCDEF family.

Its subcellular location is the cytoplasm. The catalysed reaction is UDP-N-acetyl-alpha-D-muramate + L-alanine + ATP = UDP-N-acetyl-alpha-D-muramoyl-L-alanine + ADP + phosphate + H(+). It participates in cell wall biogenesis; peptidoglycan biosynthesis. Cell wall formation. The sequence is that of UDP-N-acetylmuramate--L-alanine ligase from Rhodospirillum rubrum (strain ATCC 11170 / ATH 1.1.1 / DSM 467 / LMG 4362 / NCIMB 8255 / S1).